Reading from the N-terminus, the 173-residue chain is MANSGAKKRKTQNEKELFKVRLIMAAGTIPYILYRVVYHSETFGGWLWFAYLSLNALNMFAYYIITSMCKLTYDNNGELIDGGSDLNQGGMTEYYFDIIYVCCIIQGLGLISDKCLYLILVIPAFAIFKIWKTFIGPYLASRNQQQQQPQEEKSKRREKMEKKQEKQKVKYVK.

3 helical membrane passes run 17–39 (LFKV…VVYH), 45–65 (GWLW…YYII), and 91–111 (MTEY…LGLI). Residues 142 to 173 (RNQQQQQPQEEKSKRREKMEKKQEKQKVKYVK) are disordered. The span at 150-173 (QEEKSKRREKMEKKQEKQKVKYVK) shows a compositional bias: basic and acidic residues.

It belongs to the TMEM208 family.

It is found in the endoplasmic reticulum membrane. This is Transmembrane protein 208 homolog (tmem208) from Dictyostelium discoideum (Social amoeba).